Here is a 122-residue protein sequence, read N- to C-terminus: ATP synthase epsilon chain (122 aa).

This sequence belongs to the ATPase epsilon chain family. In terms of assembly, F-type ATPases have 2 components, CF(1) - the catalytic core - and CF(0) - the membrane proton channel. CF(1) has five subunits: alpha(3), beta(3), gamma(1), delta(1), epsilon(1). CF(0) has three main subunits: a, b and c.

The protein resides in the cell membrane. Produces ATP from ADP in the presence of a proton gradient across the membrane. This Rhodococcus jostii (strain RHA1) protein is ATP synthase epsilon chain.